Reading from the N-terminus, the 146-residue chain is MGGTADFVLSITIVLVILIIIAFIWYNFTGWSPFKYSKGNIVTFKTPDESSIAYMRFRNCIFTFTDPKGSLHSIDVTEVLNNMAKGFRDAQNPPSSFTLGGHCQAPLNAFSFVLPGVNDRATVVTADDAKKWENCDATLTGLQRII.

Residues 7 to 27 (FVLSITIVLVILIIIAFIWYN) form a helical membrane-spanning segment.

It belongs to the asfivirus E146L family.

It localises to the host membrane. The protein resides in the virion. This is an uncharacterized protein from Ornithodoros (relapsing fever ticks).